The sequence spans 95 residues: Aspartyl/glutamyl-tRNA(Asn/Gln) amidotransferase subunit C (95 aa).

The protein belongs to the GatC family. Heterotrimer of A, B and C subunits.

The enzyme catalyses L-glutamyl-tRNA(Gln) + L-glutamine + ATP + H2O = L-glutaminyl-tRNA(Gln) + L-glutamate + ADP + phosphate + H(+). It carries out the reaction L-aspartyl-tRNA(Asn) + L-glutamine + ATP + H2O = L-asparaginyl-tRNA(Asn) + L-glutamate + ADP + phosphate + 2 H(+). Its function is as follows. Allows the formation of correctly charged Asn-tRNA(Asn) or Gln-tRNA(Gln) through the transamidation of misacylated Asp-tRNA(Asn) or Glu-tRNA(Gln) in organisms which lack either or both of asparaginyl-tRNA or glutaminyl-tRNA synthetases. The reaction takes place in the presence of glutamine and ATP through an activated phospho-Asp-tRNA(Asn) or phospho-Glu-tRNA(Gln). This Chlorobaculum parvum (strain DSM 263 / NCIMB 8327) (Chlorobium vibrioforme subsp. thiosulfatophilum) protein is Aspartyl/glutamyl-tRNA(Asn/Gln) amidotransferase subunit C.